A 276-amino-acid chain; its full sequence is NH(3)-dependent NAD(+) synthetase (276 aa).

ATP is bound at residue Gly43–Ser50. Asp49 lines the Mg(2+) pocket. Deamido-NAD(+) is bound at residue Arg146. Thr166 is an ATP binding site. Glu171 lines the Mg(2+) pocket. 2 residues coordinate deamido-NAD(+): Lys179 and Asp186. 2 residues coordinate ATP: Lys195 and Thr217. His266–Lys267 is a binding site for deamido-NAD(+).

The protein belongs to the NAD synthetase family. In terms of assembly, homodimer.

The enzyme catalyses deamido-NAD(+) + NH4(+) + ATP = AMP + diphosphate + NAD(+) + H(+). It participates in cofactor biosynthesis; NAD(+) biosynthesis; NAD(+) from deamido-NAD(+) (ammonia route): step 1/1. Its function is as follows. Catalyzes the ATP-dependent amidation of deamido-NAD to form NAD. Uses ammonia as a nitrogen source. This chain is NH(3)-dependent NAD(+) synthetase, found in Shewanella halifaxensis (strain HAW-EB4).